The sequence spans 499 residues: Glycerol kinase (499 aa).

An ADP-binding site is contributed by Thr-12. Residues Thr-12, Thr-13, and Ser-14 each contribute to the ATP site. Residue Thr-12 coordinates sn-glycerol 3-phosphate. An ADP-binding site is contributed by Arg-16. Arg-82, Glu-83, and Tyr-134 together coordinate sn-glycerol 3-phosphate. Glycerol contacts are provided by Arg-82, Glu-83, and Tyr-134. His-230 carries the post-translational modification Phosphohistidine; by HPr. Asp-244 contributes to the sn-glycerol 3-phosphate binding site. Positions 244 and 245 each coordinate glycerol. ADP-binding residues include Thr-266 and Gly-309. Positions 266, 309, 313, and 410 each coordinate ATP. The ADP site is built by Gly-410 and Asn-414.

This sequence belongs to the FGGY kinase family. As to quaternary structure, homotetramer and homodimer (in equilibrium). Post-translationally, the phosphoenolpyruvate-dependent sugar phosphotransferase system (PTS), including enzyme I, and histidine-containing protein (HPr) are required for the phosphorylation, which leads to the activation of the enzyme.

The enzyme catalyses glycerol + ATP = sn-glycerol 3-phosphate + ADP + H(+). It functions in the pathway polyol metabolism; glycerol degradation via glycerol kinase pathway; sn-glycerol 3-phosphate from glycerol: step 1/1. Its activity is regulated as follows. Activated by phosphorylation and inhibited by fructose 1,6-bisphosphate (FBP). In terms of biological role, key enzyme in the regulation of glycerol uptake and metabolism. Catalyzes the phosphorylation of glycerol to yield sn-glycerol 3-phosphate. In Staphylococcus haemolyticus (strain JCSC1435), this protein is Glycerol kinase.